The chain runs to 296 residues: Nucleotide-binding protein SPCG_1551 (296 aa).

13–20 (GMSGAGKT) contacts ATP. 63–66 (DMRS) lines the GTP pocket.

This sequence belongs to the RapZ-like family.

Displays ATPase and GTPase activities. This Streptococcus pneumoniae (strain CGSP14) protein is Nucleotide-binding protein SPCG_1551.